The primary structure comprises 123 residues: MVVQDPLLCDLPIQVTLEEVNSQIALEYGQAMTVRVCKMDGEVMPVVVVQNATVLDLKKAIQRYVQLKQEREGGVQHISWSYVWRTYHLTSAGEKLTEDRKKLRDYGIRNRDEVSFIKKLRQK.

Residues 32 to 123 enclose the Ubiquitin-like domain; that stretch reads MTVRVCKMDG…VSFIKKLRQK (92 aa).

In terms of assembly, component of the U11/U12 snRNPs that are part of the U12-type spliceosome.

It localises to the nucleus. This Mus musculus (Mouse) protein is U11/U12 small nuclear ribonucleoprotein 25 kDa protein (Snrnp25).